The primary structure comprises 529 residues: Cytochrome P450 monooxygenase CLM2 (529 aa).

The helical transmembrane segment at 2-19 (LLIIVVLVGTLIYFLSFH) threads the bilayer. Residues asparagine 244 and asparagine 281 are each glycosylated (N-linked (GlcNAc...) asparagine). Heme is bound at residue cysteine 438.

The protein belongs to the cytochrome P450 family. Requires heme as cofactor.

The protein localises to the membrane. It carries out the reaction (-)-longiborneol + reduced [NADPH--hemoprotein reductase] + O2 = culmorin + oxidized [NADPH--hemoprotein reductase] + H2O + H(+). The protein operates within mycotoxin biosynthesis. Functionally, cytochrome P450 monooxygenase involved in the biosynthesis of culmorin, a tricyclic sesquiterpene diol reported to have antifungal activity and some phytotoxicity to wheat coleoptile tissue, contributing to Fusarium head blight disease. The terpene cyclase CLM1 is responsible for the cyclization of farnesyl diphosphate into the intermediate longiborneol. Longiborneol is then hydroxylated in a regio- and endo-stereoselective manner at position C-11 by the cytochrome P450 monooxygenase CLM2 to produce culmorin. Additional non-specific oxygenases are also able to hydroxylate longiborneol at other sites than C-11 leading to 3-hydroxylongiborneol, 5-hydroxylongiborneol, 12-hydroxylongiborneol and 15-hydroxylongiborneol. Moreover, another oxygenase capable of installing a C-11 exo-hydroxy group in longiborneol can also yield 11-epi-acetylculmorin. The production of these longiborneol derivatives is dwarfed by the high abundance of culmorin, suggesting that CLM2 displays superior enzymatic activity to the unidentified, possibly promiscuous, additional oxygenases. The chain is Cytochrome P450 monooxygenase CLM2 from Gibberella zeae (strain ATCC MYA-4620 / CBS 123657 / FGSC 9075 / NRRL 31084 / PH-1) (Wheat head blight fungus).